A 306-amino-acid chain; its full sequence is tRNA pseudouridine synthase B (306 aa).

Asp-43 serves as the catalytic Nucleophile.

This sequence belongs to the pseudouridine synthase TruB family. Type 1 subfamily.

The enzyme catalyses uridine(55) in tRNA = pseudouridine(55) in tRNA. Functionally, responsible for synthesis of pseudouridine from uracil-55 in the psi GC loop of transfer RNAs. This Lacticaseibacillus casei (strain BL23) (Lactobacillus casei) protein is tRNA pseudouridine synthase B.